The following is a 39-amino-acid chain: Photosystem II reaction center protein J (39 aa).

The chain crosses the membrane as a helical span at residues I7 to F27.

It belongs to the PsbJ family. PSII is composed of 1 copy each of membrane proteins PsbA, PsbB, PsbC, PsbD, PsbE, PsbF, PsbH, PsbI, PsbJ, PsbK, PsbL, PsbM, PsbT, PsbX, PsbY, PsbZ, Psb30/Ycf12, peripheral proteins PsbO, CyanoQ (PsbQ), PsbU, PsbV and a large number of cofactors. It forms dimeric complexes.

It is found in the cellular thylakoid membrane. In terms of biological role, one of the components of the core complex of photosystem II (PSII). PSII is a light-driven water:plastoquinone oxidoreductase that uses light energy to abstract electrons from H(2)O, generating O(2) and a proton gradient subsequently used for ATP formation. It consists of a core antenna complex that captures photons, and an electron transfer chain that converts photonic excitation into a charge separation. This chain is Photosystem II reaction center protein J, found in Microcystis aeruginosa (strain NIES-843 / IAM M-2473).